The chain runs to 736 residues: DNA ligase (736 aa).

NAD(+) is bound by residues Asp41 to Asp45, Ser91 to Leu92, and Glu125. Residue Lys127 is the N6-AMP-lysine intermediate of the active site. Arg148 serves as a coordination point for NAD(+). The interval Glu170–Asn205 is disordered. 3 residues coordinate NAD(+): Glu215, Lys347, and Lys371. Residues Cys463, Cys466, Cys481, and Cys487 each coordinate Zn(2+). Positions Thr656–Gly736 constitute a BRCT domain.

It belongs to the NAD-dependent DNA ligase family. LigA subfamily. Mg(2+) is required as a cofactor. It depends on Mn(2+) as a cofactor.

It catalyses the reaction NAD(+) + (deoxyribonucleotide)n-3'-hydroxyl + 5'-phospho-(deoxyribonucleotide)m = (deoxyribonucleotide)n+m + AMP + beta-nicotinamide D-nucleotide.. DNA ligase that catalyzes the formation of phosphodiester linkages between 5'-phosphoryl and 3'-hydroxyl groups in double-stranded DNA using NAD as a coenzyme and as the energy source for the reaction. It is essential for DNA replication and repair of damaged DNA. The sequence is that of DNA ligase from Erythrobacter litoralis (strain HTCC2594).